Here is a 281-residue protein sequence, read N- to C-terminus: Ribulose-5-phosphate-3-epimerase, chloroplastic (281 aa).

The N-terminal 45 residues, 1 to 45 (MSTSAASLCCSSTQVNGFGLRPERSLLYQPTSFSFSRRRTHGIVK), are a transit peptide targeting the chloroplast. Position 63 (S63) interacts with substrate. 3 residues coordinate a divalent metal cation: H88, D90, and H121. Residue D90 is the Proton acceptor of the active site. Substrate is bound by residues H121, 199–202 (GFGG), 232–234 (DGG), and 254–256 (GSA). D232 contributes to the a divalent metal cation binding site. D232 (proton donor) is an active-site residue.

It belongs to the ribulose-phosphate 3-epimerase family. In terms of assembly, homooctamer. It depends on Co(2+) as a cofactor. Fe(2+) is required as a cofactor. The cofactor is Mn(2+). Requires Zn(2+) as cofactor. In terms of tissue distribution, present in roots, seeds and flowers. Accumulates in nematode feeding sites (NFS).

The protein resides in the plastid. Its subcellular location is the chloroplast thylakoid membrane. The catalysed reaction is D-ribulose 5-phosphate = D-xylulose 5-phosphate. The protein operates within carbohydrate biosynthesis; Calvin cycle. Functionally, essential protein required during embryogenesis. Catalyzes the reversible epimerization of D-ribulose 5-phosphate to D-xylulose 5-phosphate. Essential for the early steps of nematode feeding sites (NFS, multinucleated root cells) formation induced by the root-knot nematodes Heterodera schachtii, Meloidogyne incognita, M.javanica and M.hapla. In Arabidopsis thaliana (Mouse-ear cress), this protein is Ribulose-5-phosphate-3-epimerase, chloroplastic.